A 64-amino-acid chain; its full sequence is Large ribosomal subunit protein uL30 (64 aa).

The protein belongs to the universal ribosomal protein uL30 family. Part of the 50S ribosomal subunit.

This Bdellovibrio bacteriovorus (strain ATCC 15356 / DSM 50701 / NCIMB 9529 / HD100) protein is Large ribosomal subunit protein uL30.